Here is a 392-residue protein sequence, read N- to C-terminus: 8-amino-7-oxononanoate synthase 1 (392 aa).

A pyridoxal 5'-phosphate-binding site is contributed by 109 to 110 (GF). Position 134 (His134) interacts with substrate. Pyridoxal 5'-phosphate-binding positions include Ser181, 206-209 (DDAH), and 237-240 (TLSK). At Lys240 the chain carries N6-(pyridoxal phosphate)lysine. Residue Thr354 coordinates substrate.

It belongs to the class-II pyridoxal-phosphate-dependent aminotransferase family. BioF subfamily. As to quaternary structure, homodimer. The cofactor is pyridoxal 5'-phosphate.

It catalyses the reaction 6-carboxyhexanoyl-[ACP] + L-alanine + H(+) = (8S)-8-amino-7-oxononanoate + holo-[ACP] + CO2. It functions in the pathway cofactor biosynthesis; biotin biosynthesis. In terms of biological role, catalyzes the decarboxylative condensation of pimeloyl-[acyl-carrier protein] and L-alanine to produce 8-amino-7-oxononanoate (AON), [acyl-carrier protein], and carbon dioxide. This Bacillus subtilis (strain 168) protein is 8-amino-7-oxononanoate synthase 1 (kbl).